Consider the following 334-residue polypeptide: UDP-glucose 4-epimerase (334 aa).

NAD(+)-binding positions include 11–12 (YI), 31–36 (DNLQKG), 50–51 (DI), 72–76 (FAANS), Asn-91, Thr-116, Tyr-140, Lys-144, and Phe-168. Positions 116 and 140 each coordinate substrate. Tyr-140 serves as the catalytic Proton acceptor. Residues Asn-169, 188 to 189 (HL), 205 to 207 (AIF), Arg-220, and 281 to 284 (RSGD) each bind substrate.

Belongs to the NAD(P)-dependent epimerase/dehydratase family. As to quaternary structure, homodimer. Requires NAD(+) as cofactor.

It catalyses the reaction UDP-alpha-D-glucose = UDP-alpha-D-galactose. Its pathway is carbohydrate metabolism; galactose metabolism. Involved in the metabolism of galactose. Catalyzes the conversion of UDP-galactose (UDP-Gal) to UDP-glucose (UDP-Glc) through a mechanism involving the transient reduction of NAD. The sequence is that of UDP-glucose 4-epimerase (galE) from Halalkalibacterium halodurans (strain ATCC BAA-125 / DSM 18197 / FERM 7344 / JCM 9153 / C-125) (Bacillus halodurans).